The sequence spans 143 residues: Large ribosomal subunit protein uL13 (143 aa).

Belongs to the universal ribosomal protein uL13 family. As to quaternary structure, part of the 50S ribosomal subunit.

This protein is one of the early assembly proteins of the 50S ribosomal subunit, although it is not seen to bind rRNA by itself. It is important during the early stages of 50S assembly. In Caldanaerobacter subterraneus subsp. tengcongensis (strain DSM 15242 / JCM 11007 / NBRC 100824 / MB4) (Thermoanaerobacter tengcongensis), this protein is Large ribosomal subunit protein uL13.